Reading from the N-terminus, the 456-residue chain is Enolase (456 aa).

Residue glutamine 164 coordinates (2R)-2-phosphoglycerate. The active-site Proton donor is the glutamate 207. Mg(2+) is bound by residues aspartate 244, glutamate 287, and aspartate 314. Positions 339, 368, 369, and 390 each coordinate (2R)-2-phosphoglycerate. Lysine 339 serves as the catalytic Proton acceptor.

This sequence belongs to the enolase family. Component of the RNA degradosome, a multiprotein complex involved in RNA processing and mRNA degradation. Mg(2+) serves as cofactor.

It localises to the cytoplasm. The protein resides in the secreted. Its subcellular location is the cell surface. It catalyses the reaction (2R)-2-phosphoglycerate = phosphoenolpyruvate + H2O. It functions in the pathway carbohydrate degradation; glycolysis; pyruvate from D-glyceraldehyde 3-phosphate: step 4/5. Catalyzes the reversible conversion of 2-phosphoglycerate (2-PG) into phosphoenolpyruvate (PEP). It is essential for the degradation of carbohydrates via glycolysis. The chain is Enolase from Francisella tularensis subsp. novicida (strain U112).